Here is a 532-residue protein sequence, read N- to C-terminus: P granule abnormality protein 2 (532 aa).

Interacts with pgl-1 and pgl-3; association with either pgl-1 or pgl-3 is not required for P-granule localization. In terms of tissue distribution, highly expressed in the germline.

The protein localises to the cytoplasmic granule. In terms of biological role, transient component of P-granule which is involved in germline development. This chain is P granule abnormality protein 2, found in Caenorhabditis elegans.